The following is an 88-amino-acid chain: Small ribosomal subunit protein uS17 (88 aa).

This sequence belongs to the universal ribosomal protein uS17 family. Part of the 30S ribosomal subunit.

Its function is as follows. One of the primary rRNA binding proteins, it binds specifically to the 5'-end of 16S ribosomal RNA. The sequence is that of Small ribosomal subunit protein uS17 from Helicobacter hepaticus (strain ATCC 51449 / 3B1).